A 423-amino-acid chain; its full sequence is Gamma-glutamyl phosphate reductase (423 aa).

This sequence belongs to the gamma-glutamyl phosphate reductase family.

The protein localises to the cytoplasm. The enzyme catalyses L-glutamate 5-semialdehyde + phosphate + NADP(+) = L-glutamyl 5-phosphate + NADPH + H(+). Its pathway is amino-acid biosynthesis; L-proline biosynthesis; L-glutamate 5-semialdehyde from L-glutamate: step 2/2. Its function is as follows. Catalyzes the NADPH-dependent reduction of L-glutamate 5-phosphate into L-glutamate 5-semialdehyde and phosphate. The product spontaneously undergoes cyclization to form 1-pyrroline-5-carboxylate. This Paraburkholderia phymatum (strain DSM 17167 / CIP 108236 / LMG 21445 / STM815) (Burkholderia phymatum) protein is Gamma-glutamyl phosphate reductase.